The following is a 262-amino-acid chain: Acyl-[acyl-carrier-protein]--UDP-N-acetylglucosamine O-acyltransferase (262 aa).

This sequence belongs to the transferase hexapeptide repeat family. LpxA subfamily. Homotrimer.

The protein localises to the cytoplasm. The catalysed reaction is a (3R)-hydroxyacyl-[ACP] + UDP-N-acetyl-alpha-D-glucosamine = a UDP-3-O-[(3R)-3-hydroxyacyl]-N-acetyl-alpha-D-glucosamine + holo-[ACP]. Its pathway is glycolipid biosynthesis; lipid IV(A) biosynthesis; lipid IV(A) from (3R)-3-hydroxytetradecanoyl-[acyl-carrier-protein] and UDP-N-acetyl-alpha-D-glucosamine: step 1/6. Its function is as follows. Involved in the biosynthesis of lipid A, a phosphorylated glycolipid that anchors the lipopolysaccharide to the outer membrane of the cell. In Aliivibrio fischeri (strain ATCC 700601 / ES114) (Vibrio fischeri), this protein is Acyl-[acyl-carrier-protein]--UDP-N-acetylglucosamine O-acyltransferase.